The following is a 365-amino-acid chain: Histidinol-phosphate aminotransferase (365 aa).

Lys-223 is modified (N6-(pyridoxal phosphate)lysine).

This sequence belongs to the class-II pyridoxal-phosphate-dependent aminotransferase family. Histidinol-phosphate aminotransferase subfamily. Homodimer. Pyridoxal 5'-phosphate is required as a cofactor.

It catalyses the reaction L-histidinol phosphate + 2-oxoglutarate = 3-(imidazol-4-yl)-2-oxopropyl phosphate + L-glutamate. The protein operates within amino-acid biosynthesis; L-histidine biosynthesis; L-histidine from 5-phospho-alpha-D-ribose 1-diphosphate: step 7/9. The protein is Histidinol-phosphate aminotransferase of Bacillus pumilus (strain SAFR-032).